The following is a 116-amino-acid chain: Large ribosomal subunit protein uL18 (116 aa).

This sequence belongs to the universal ribosomal protein uL18 family. Part of the 50S ribosomal subunit; part of the 5S rRNA/L5/L18/L25 subcomplex. Contacts the 5S and 23S rRNAs.

In terms of biological role, this is one of the proteins that bind and probably mediate the attachment of the 5S RNA into the large ribosomal subunit, where it forms part of the central protuberance. In Shewanella woodyi (strain ATCC 51908 / MS32), this protein is Large ribosomal subunit protein uL18.